The sequence spans 149 residues: Large ribosomal subunit protein uL15 (149 aa).

Residues 1–64 form a disordered region; that stretch reads MVELHDLQPH…GQTPLYMRIP (64 aa). Positions 31–40 are enriched in basic residues; that stretch reads TAGRGHKGQK.

Belongs to the universal ribosomal protein uL15 family. In terms of assembly, part of the 50S ribosomal subunit.

In terms of biological role, binds to the 23S rRNA. The polypeptide is Large ribosomal subunit protein uL15 (Aquifex aeolicus (strain VF5)).